A 466-amino-acid polypeptide reads, in one-letter code: Glutamate--tRNA ligase 1 (466 aa).

Positions 10–20 match the 'HIGH' region motif; that stretch reads PSPTGLIHLGN. Zn(2+) is bound by residues Cys-103, Cys-105, Cys-130, and His-132. A 'KMSKS' region motif is present at residues 247-251; that stretch reads PLSKR. Residue Lys-250 participates in ATP binding.

It belongs to the class-I aminoacyl-tRNA synthetase family. Glutamate--tRNA ligase type 1 subfamily. In terms of assembly, monomer. Zn(2+) serves as cofactor.

It localises to the cytoplasm. It carries out the reaction tRNA(Glu) + L-glutamate + ATP = L-glutamyl-tRNA(Glu) + AMP + diphosphate. Functionally, catalyzes the attachment of glutamate to tRNA(Glu) in a two-step reaction: glutamate is first activated by ATP to form Glu-AMP and then transferred to the acceptor end of tRNA(Glu). In Methylococcus capsulatus (strain ATCC 33009 / NCIMB 11132 / Bath), this protein is Glutamate--tRNA ligase 1.